Consider the following 800-residue polypeptide: Phenylalanine--tRNA ligase beta subunit (800 aa).

The region spanning 39–154 (TKDIKNLVVG…ESQVPGTDAL (116 aa)) is the tRNA-binding domain. A B5 domain is found at 408–483 (AFITPIDITA…RIYGYDDIPS (76 aa)). Mg(2+) is bound by residues Asp461, Asp467, Glu470, and Glu471. An FDX-ACB domain is found at 708–800 (PRFPGMSRDI…ALIEQGAVIR (93 aa)).

The protein belongs to the phenylalanyl-tRNA synthetase beta subunit family. Type 1 subfamily. As to quaternary structure, tetramer of two alpha and two beta subunits. Requires Mg(2+) as cofactor.

It localises to the cytoplasm. The catalysed reaction is tRNA(Phe) + L-phenylalanine + ATP = L-phenylalanyl-tRNA(Phe) + AMP + diphosphate + H(+). This Staphylococcus aureus protein is Phenylalanine--tRNA ligase beta subunit.